Consider the following 122-residue polypeptide: N(2)-fixation sustaining protein CowN (122 aa).

Belongs to the CowN family.

Its function is as follows. Is required to sustain N(2)-dependent growth in the presence of low levels of carbon monoxide (CO). Probably acts by protecting the N(2) fixation ability of the nitrogenase complex, which is inactivated in the presence of CO. The protein is N(2)-fixation sustaining protein CowN of Azorhizobium caulinodans (strain ATCC 43989 / DSM 5975 / JCM 20966 / LMG 6465 / NBRC 14845 / NCIMB 13405 / ORS 571).